Consider the following 105-residue polypeptide: Mitomycin resistance protein McrB (105 aa).

In terms of biological role, involved in mitomycin resistance. May operate with McrA or may be a type of transcriptional activator protein. The sequence is that of Mitomycin resistance protein McrB (mcrB) from Streptomyces lavendulae.